The following is a 155-amino-acid chain: Large ribosomal subunit protein uL30 (155 aa).

It belongs to the universal ribosomal protein uL30 family. As to quaternary structure, part of the 50S ribosomal subunit.

This is Large ribosomal subunit protein uL30 from Nanoarchaeum equitans (strain Kin4-M).